Here is a 389-residue protein sequence, read N- to C-terminus: MTNKTITLNLGPQHPATHGVLRLILEMDGEVVNNADPHIGLLHRGTEKLIEHKTYLQAIPYFDRLDYVSPMCQEHAFALAVESLLECSVPRRAQFIRVLFSELTRILNHTLNIGSQALDIGATTPLLWLFEEREKIMEFYERVSGSRMHANYFRPGGVAEDLPEKLLEDINKFIEQFPSKLNDIENLLNENRLWKQRLVDIGVVSQKDAMDWGFSGPMLRGSGIAWDLRKSNPYDVYDEMDFEVPVGKNGDCYDRYLVRILEMYESIKIIKQCIAKMPKGQVKTDNPKLTPPTREKMKESMEAMIHHFKLYTEGYDVPIGETYKAVEAPKGEFGVYLYSQGGNKPYRCRIKAPGFAHLQGLNFMSKGHLISDVITIIATLDIVFGEIDR.

Belongs to the complex I 49 kDa subunit family. In terms of assembly, NDH-1 is composed of 14 different subunits. Subunits NuoB, C, D, E, F, and G constitute the peripheral sector of the complex.

The protein resides in the cell inner membrane. The enzyme catalyses a quinone + NADH + 5 H(+)(in) = a quinol + NAD(+) + 4 H(+)(out). Functionally, NDH-1 shuttles electrons from NADH, via FMN and iron-sulfur (Fe-S) centers, to quinones in the respiratory chain. The immediate electron acceptor for the enzyme in this species is believed to be ubiquinone. Couples the redox reaction to proton translocation (for every two electrons transferred, four hydrogen ions are translocated across the cytoplasmic membrane), and thus conserves the redox energy in a proton gradient. The protein is NADH-quinone oxidoreductase subunit D of Rickettsia typhi (strain ATCC VR-144 / Wilmington).